We begin with the raw amino-acid sequence, 949 residues long: ATPase 1, plasma membrane-type (949 aa).

Ser2 bears the N-acetylserine mark. At 2 to 61 (SGLEDIKNETVDLEKIPIEEVFQQLKCTREGLTTQEGEDRIVIFGPNKLEEKKESKILKF) the chain is on the cytoplasmic side. A helical membrane pass occupies residues 62–81 (LGFMWNPLSWVMEAAALMAI). At 82 to 93 (ALANGDNRPPDW) the chain is on the extracellular side. The chain crosses the membrane as a helical span at residues 94 to 114 (QDFVGIICLLVINSTISFIEE). At 115 to 243 (NNAGNAAAAL…GHFQKVLTSI (129 aa)) the chain is on the cytoplasmic side. The helical transmembrane segment at 244–264 (GNFCICSIAIGIAIEIVVMYP) threads the bilayer. The Extracellular segment spans residues 265-273 (IQHRKYRDG). The helical transmembrane segment at 274-291 (IDNLLVLLIGGIPIAMPT) threads the bilayer. Residues 292 to 643 (VLSVTMAIGS…TSRAIFQRMK (352 aa)) are Cytoplasmic-facing. Catalysis depends on Asp329, which acts as the 4-aspartylphosphate intermediate. Mg(2+) is bound by residues Asp588 and Asp592. A helical transmembrane segment spans residues 644 to 665 (NYTIYAVSITIRIVFGFMLIAL). Topologically, residues 666–670 (IWEFD) are extracellular. The chain crosses the membrane as a helical span at residues 671–693 (FSAFMVLIIAILNDGTIMTISKD). The Cytoplasmic portion of the chain corresponds to 694–709 (RVKPSPTPDSWKLKEI). A helical transmembrane segment spans residues 710-730 (FATGIVLGGYQAIMSVIFFWA). Residues 731–751 (AHKTDFFSDKFGVRSIRDNND) lie on the Extracellular side of the membrane. A helical transmembrane segment spans residues 752-772 (ELMGAVYLQVSIISQALIFVT). Topologically, residues 773-784 (RSRSWSFVERPG) are cytoplasmic. A helical membrane pass occupies residues 785-805 (ALLMIAFVIAQLVATLIAVYA). The Extracellular portion of the chain corresponds to 806 to 813 (DWTFAKVK). The chain crosses the membrane as a helical span at residues 814-834 (GIGWGWAGVIWIYSIVTYFPQ). Residues 835–949 (DILKFAIRYI…IDTAGHHYTV (115 aa)) are Cytoplasmic-facing. The residue at position 881 (Thr881) is a Phosphothreonine. Ser899 and Ser931 each carry phosphoserine. Residues 947 to 949 (YTV) form an interaction with 14-3-3 proteins region. Thr948 carries the post-translational modification Phosphothreonine.

It belongs to the cation transport ATPase (P-type) (TC 3.A.3) family. Type IIIA subfamily. As to quaternary structure, binds to 14-3-3 proteins. The binding is induced by phosphorylation of Thr-948. Binding to 14-3-3 proteins activates the H(+)-ATPase. Interacts with PPI1; this interaction promotes ATPase activity. Interacts with PSY1R. Part of a functional complex containing PSKR1, BAK1, CNGC17, and AHA. Interacts with CNGC17 and PSKR1. Triggered by SAUR9 via the phosphorylation of the C-terminal autoinhibitory domain. Interacts with AHA2. Binds to CBC1 and CBC2. In terms of processing, phosphorylated, probably by PHOT1 and PHOT2, at C-terminal Thr-948 in guard cells in response to blue light to induce stomatal opening. As to expression, expressed in guard cells, mesophyll cells, leaves and roots.

It is found in the cell membrane. It catalyses the reaction ATP + H2O + H(+)(in) = ADP + phosphate + 2 H(+)(out). Phosphorylation on Thr residues is repressed by tyrphostin 9, sphingosine, GW5074 and BML-265. By contrast, the fungal phytotoxin fusicoccin (FC) promotes phosphorylation of Thr-948 independently to BHP, thus leading to large stomatal opening. In terms of biological role, the plasma membrane H(+) ATPase of plants and fungi generates a proton gradient that drives the active transport of nutrients by H(+)-symport. The resulting external acidification and/or internal alkinization may mediate growth responses. Forms a functional cation-translocating unit with CNGC17 that is activated by PSKR1/BAK1 and possibly other BAK1/RLK complexes. Promotes stomatal opening in response to blue light. In Arabidopsis thaliana (Mouse-ear cress), this protein is ATPase 1, plasma membrane-type.